The following is a 366-amino-acid chain: tRNA/tmRNA (uracil-C(5))-methyltransferase (366 aa).

Residues glutamine 190, tyrosine 218, asparagine 223, glutamate 239, and aspartate 299 each coordinate S-adenosyl-L-methionine. Residue cysteine 324 is the Nucleophile of the active site. Glutamate 358 (proton acceptor) is an active-site residue.

This sequence belongs to the class I-like SAM-binding methyltransferase superfamily. RNA M5U methyltransferase family. TrmA subfamily.

The enzyme catalyses uridine(54) in tRNA + S-adenosyl-L-methionine = 5-methyluridine(54) in tRNA + S-adenosyl-L-homocysteine + H(+). The catalysed reaction is uridine(341) in tmRNA + S-adenosyl-L-methionine = 5-methyluridine(341) in tmRNA + S-adenosyl-L-homocysteine + H(+). Its function is as follows. Dual-specificity methyltransferase that catalyzes the formation of 5-methyluridine at position 54 (m5U54) in all tRNAs, and that of position 341 (m5U341) in tmRNA (transfer-mRNA). This Shigella boydii serotype 18 (strain CDC 3083-94 / BS512) protein is tRNA/tmRNA (uracil-C(5))-methyltransferase.